The chain runs to 685 residues: Mesothelin-like protein (685 aa).

An N-terminal signal peptide occupies residues 1-32 (MSRTLRPSAMGSRVGALASPGLALLLSLTAHC). The Extracellular segment spans residues 33 to 627 (SGPQAKGLPK…GVSHTSGSPP (595 aa)). N-linked (GlcNAc...) asparagine glycans are attached at residues N315 and N400. Positions 603 to 624 (PPSSLIHSLDPPGNDGVSHTSG) are disordered. A helical transmembrane segment spans residues 628–648 (VHLGYLSLAVALPSSLLWLLL). At 649–685 (CQLPSGQMATAHRTLGPMALAQGSWTPEHQIPEKRSC) the chain is on the cytoplasmic side.

The protein belongs to the mesothelin family.

It is found in the membrane. May play a role in cellular adhesion. This chain is Mesothelin-like protein (Mslnl), found in Mus musculus (Mouse).